A 243-amino-acid chain; its full sequence is R-spondin-2 (243 aa).

A signal peptide spans 1 to 21 (MQFQLFSFVLIILNCVDYSHC). 11 disulfide bridges follow: Cys-40-Cys-46, Cys-43-Cys-52, Cys-55-Cys-74, Cys-78-Cys-93, Cys-96-Cys-104, Cys-101-Cys-110, Cys-113-Cys-124, Cys-128-Cys-141, Cys-145-Cys-187, Cys-156-Cys-163, and Cys-196-Cys-203. The FU repeat unit spans residues 90–134 (MNRCSRCRIENCDSCFSRDFCIKCKSGFYSHKGQCFEECPEGFAP). The region spanning 144-204 (GCEVGPWSEW…RCKMAMRHCP (61 aa)) is the TSP type-1 domain. N-linked (GlcNAc...) asparagine glycosylation is present at Asn-160. The disordered stretch occupies residues 202 to 243 (HCPGGTRTTKKKDKKNKKKKKKLLERAQEQHSVVLATDRSSQ). Basic residues predominate over residues 209–224 (TTKKKDKKNKKKKKKL).

The protein belongs to the R-spondin family. In terms of assembly, binds heparin.

The protein localises to the secreted. Functionally, activator of the canonical Wnt signaling pathway by acting as a ligand for lgr4-6 receptors. Upon binding to lgr4-6 (lgr4, lgr5 or lgr6), lgr4-6 associate with phosphorylated lrp6 and frizzled receptors that are activated by extracellular Wnt receptors, triggering the canonical Wnt signaling pathway to increase expression of target genes. Acts both in the canonical. Wnt/beta-catenin-dependent pathway and in non-canonical Wnt signaling pathway. Activates neural markers and promotes muscle formation. Overexpression blocks activin, nodal and BMP4 signaling, suggesting that it may negatively regulate the TGF-beta pathway. During embryonic development, plays a crucial role in limb specification, amplifying the Wnt signaling pathway independently of LGR4-6 receptors, possibly by acting as a direct antagonistic ligand to RNF43 and ZNRF3, hence governing the number of limbs an embryo should form. The polypeptide is R-spondin-2 (rspo2) (Xenopus tropicalis (Western clawed frog)).